The sequence spans 367 residues: Dual specificity protein phosphatase 1 (367 aa).

The Rhodanese domain occupies 20-137 (RAAQCLLLDC…FSASCPELCS (118 aa)). In terms of domain architecture, Tyrosine-protein phosphatase spans 173 to 314 (GPVEILPFLY…LLQFESQVLA (142 aa)). The Phosphocysteine intermediate role is filled by C258. A phosphoserine; by MAPK1 and MAPK3 mark is found at S359 and S364.

This sequence belongs to the protein-tyrosine phosphatase family. Non-receptor class dual specificity subfamily. In terms of processing, phosphorylation at Ser-359 and Ser-364 by MAPK1/ERK2 and MAPK3/ERK1 reduces its rate of degradation. Post-translationally, 'Lys-48'-linked polyubiquitinated by NEURL3, leading to proteasomal degradation. In terms of tissue distribution, expressed at high levels in the lung, liver placenta and pancreas. Moderate levels seen in the heart and skeletal muscle. Lower levels found in the brain and kidney.

The protein resides in the nucleus. The enzyme catalyses O-phospho-L-tyrosyl-[protein] + H2O = L-tyrosyl-[protein] + phosphate. It carries out the reaction O-phospho-L-seryl-[protein] + H2O = L-seryl-[protein] + phosphate. It catalyses the reaction O-phospho-L-threonyl-[protein] + H2O = L-threonyl-[protein] + phosphate. Functionally, dual specificity phosphatase that dephosphorylates MAP kinase MAPK1/ERK2 on both 'Thr-183' and 'Tyr-185', regulating its activity during the meiotic cell cycle. The protein is Dual specificity protein phosphatase 1 of Homo sapiens (Human).